Here is a 447-residue protein sequence, read N- to C-terminus: Argininosuccinate synthase (447 aa).

ATP is bound by residues 17-25 and A43; that span reads AFSGGLDTS. Y99 contacts L-citrulline. Positions 129 and 131 each coordinate ATP. T131, N135, and D136 together coordinate L-aspartate. N135 contributes to the L-citrulline binding site. Residue D136 participates in ATP binding. 2 residues coordinate L-citrulline: R139 and S192. D194 serves as a coordination point for ATP. Residues T201, E203, and E280 each coordinate L-citrulline.

Belongs to the argininosuccinate synthase family. Type 2 subfamily. As to quaternary structure, homotetramer.

It localises to the cytoplasm. The enzyme catalyses L-citrulline + L-aspartate + ATP = 2-(N(omega)-L-arginino)succinate + AMP + diphosphate + H(+). Its pathway is amino-acid biosynthesis; L-arginine biosynthesis; L-arginine from L-ornithine and carbamoyl phosphate: step 2/3. The sequence is that of Argininosuccinate synthase from Salmonella schwarzengrund (strain CVM19633).